A 276-amino-acid chain; its full sequence is 2-dehydro-3-deoxyphosphooctonate aldolase (276 aa).

It belongs to the KdsA family.

The protein resides in the cytoplasm. It catalyses the reaction D-arabinose 5-phosphate + phosphoenolpyruvate + H2O = 3-deoxy-alpha-D-manno-2-octulosonate-8-phosphate + phosphate. It participates in carbohydrate biosynthesis; 3-deoxy-D-manno-octulosonate biosynthesis; 3-deoxy-D-manno-octulosonate from D-ribulose 5-phosphate: step 2/3. It functions in the pathway bacterial outer membrane biogenesis; lipopolysaccharide biosynthesis. This Helicobacter pylori (strain P12) protein is 2-dehydro-3-deoxyphosphooctonate aldolase.